The chain runs to 278 residues: Envelope glycoprotein L (278 aa).

The signal sequence occupies residues 1–30 (MCRRPDCGFSFSPGPVVLLWCCLLLPIVSS). Residues 43–256 (VPAECPELTR…DKYYAGLPPE (214 aa)) enclose the gL betaherpesvirus-type domain. A disulfide bridge links Cys154 with Cys159.

Belongs to the herpesviridae glycoprotein L (gL) family. Betaherpesvirinae gL subfamily. Interacts with glycoprotein H (gH); this interaction is necessary for the correct processing and cell surface expression of gH. Forms the envelope pentamer complex (PC) composed of gH, gL, UL128, UL130, and UL131A. The pentamer interacts with host NRP2. Forms the envelope trimer complex composed of gH, gL, and gO. The trimer interacts with host PDGFRA. The trimer also interacts with host EPHA2.

Its subcellular location is the virion membrane. The protein resides in the host cell membrane. The protein localises to the host Golgi apparatus. It localises to the host trans-Golgi network. The heterodimer glycoprotein H-glycoprotein L is required for the fusion of viral and plasma membranes leading to virus entry into the host cell. Acts as a functional inhibitor of gH and maintains gH in an inhibited form. Upon binding to host integrins, gL dissociates from gH leading to activation of the viral fusion glycoproteins gB and gH. In human cytomegalovirus, forms two distincts complexes to mediate viral entry, a trimer and a pentamer at the surface of the virion envelope. The gH-gL-gO trimer is required for infection in fibroblasts by interacting with host PDGFRA, and in glioblastoma cells by interacting with host EPHA2. The gH-gL-UL128-UL130-UL131A pentamer is essential for viral entry in epithelial, endothelial and myeloid cells via interaction with host NRP2. This chain is Envelope glycoprotein L, found in Human cytomegalovirus (strain 5040) (HHV-5).